We begin with the raw amino-acid sequence, 267 residues long: Hydroxynaphthalene reductase-like protein Arp2 (267 aa).

Ile-25, Asn-45, Asp-71, and Asn-98 together coordinate NADP(+). Active-site proton donor residues include Ser-147 and Ser-148. 4 residues coordinate NADP(+): Tyr-162, Lys-166, Val-195, and Thr-197. The active-site Proton acceptor is Tyr-162. Lys-166 acts as the Lowers pKa of active site Tyr in catalysis.

The protein belongs to the short-chain dehydrogenases/reductases (SDR) family.

In terms of biological role, hydroxynaphthalene reductase-like protein; part of the Pks2 gene cluster that mediates the formation of infectious structures (appressoria), enabling these fungi to kill insects faster. The product of the Pks2 gene cluster is different from the one of Pks1 and has still not been identified. In Metarhizium anisopliae (strain ARSEF 549), this protein is Hydroxynaphthalene reductase-like protein Arp2.